The following is a 195-amino-acid chain: Ubiquitin-conjugating enzyme E2 T (195 aa).

In terms of domain architecture, UBC core spans Gln-2–Arg-152. The active-site Glycyl thioester intermediate is the Cys-86. A Glycyl lysine isopeptide (Lys-Gly) (interchain with G-Cter in ubiquitin) cross-link involves residue Lys-91. Over residues Trp-146 to Glu-157 the composition is skewed to basic and acidic residues. The interval Trp-146–Val-195 is disordered. Residue Lys-180 forms a Glycyl lysine isopeptide (Lys-Gly) (interchain with G-Cter in ubiquitin) linkage. Lys-189 participates in a covalent cross-link: Glycyl lysine isopeptide (Lys-Gly) (interchain with G-Cter in SUMO2).

It belongs to the ubiquitin-conjugating enzyme family. As to quaternary structure, interacts with FANCL and BRCA1. In terms of processing, auto-ubiquitinated. Effects of auto-monoubiquitination at Lys-91 and Lys-180 are unclear.

The protein localises to the nucleus. The enzyme catalyses S-ubiquitinyl-[E1 ubiquitin-activating enzyme]-L-cysteine + [E2 ubiquitin-conjugating enzyme]-L-cysteine = [E1 ubiquitin-activating enzyme]-L-cysteine + S-ubiquitinyl-[E2 ubiquitin-conjugating enzyme]-L-cysteine.. It functions in the pathway protein modification; protein ubiquitination. Its function is as follows. Accepts ubiquitin from the E1 complex and catalyzes its covalent attachment to other proteins. Catalyzes monoubiquitination. Involved in mitomycin-C (MMC)-induced DNA repair: acts as a specific E2 ubiquitin-conjugating enzyme for the Fanconi anemia complex by associating with E3 ubiquitin-protein ligase FANCL and catalyzing monoubiquitination of FANCD2, a key step in the DNA damage pathway. Also mediates monoubiquitination of FANCL and FANCI. May contribute to ubiquitination and degradation of BRCA1. In vitro able to promote polyubiquitination using all 7 ubiquitin Lys residues, but may prefer 'Lys-11'-, 'Lys-27'-, 'Lys-48'- and 'Lys-63'-linked polyubiquitination. In Bos taurus (Bovine), this protein is Ubiquitin-conjugating enzyme E2 T (UBE2T).